A 212-amino-acid chain; its full sequence is Tetraspanin-31-B (212 aa).

Topologically, residues 1 to 12 (MVCGGFTCSKNA) are cytoplasmic. The helical transmembrane segment at 13-33 (LCALNVVYMLVGVLLIIVAAW) threads the bilayer. Residues 34–44 (GKGFGIVSSIH) lie on the Extracellular side of the membrane. The chain crosses the membrane as a helical span at residues 45 to 65 (IIGGVIAIGVFLLLIAIIGLI). Residues 66–72 (GAVSHHQ) lie on the Cytoplasmic side of the membrane. A helical transmembrane segment spans residues 73–93 (VMLFIYMVVLILVFIFQFIVS). Topologically, residues 94–175 (CSCLAMNRSQ…MLNHADEALK (82 aa)) are extracellular. Asparagine 100, asparagine 109, asparagine 117, and asparagine 134 each carry an N-linked (GlcNAc...) asparagine glycan. The helical transmembrane segment at 176–196 (ILGGVGLFFSFTEILGVWLAF) threads the bilayer. Over 197-212 (RYRNQKDPRANPSAFL) the chain is Cytoplasmic.

Belongs to the tetraspanin (TM4SF) family.

It is found in the membrane. This is Tetraspanin-31-B (tspan31-b) from Xenopus laevis (African clawed frog).